We begin with the raw amino-acid sequence, 114 residues long: T cell receptor alpha variable 24 (114 aa).

An N-terminal signal peptide occupies residues 1–22 (MEKNPLAAPLLILWFHLDCVSS). The Ig-like domain maps to 23 to 114 (ILNVEQSPQS…EDSATYLCAF (92 aa)). A glycan (N-linked (GlcNAc...) asparagine) is linked at asparagine 42. The cysteines at positions 45 and 112 are disulfide-linked.

In terms of assembly, alpha-beta TR is a heterodimer composed of an alpha and beta chain; disulfide-linked. The alpha-beta TR is associated with the transmembrane signaling CD3 coreceptor proteins to form the TR-CD3 (TcR or TCR). The assembly of alpha-beta TR heterodimers with CD3 occurs in the endoplasmic reticulum where a single alpha-beta TR heterodimer associates with one CD3D-CD3E heterodimer, one CD3G-CD3E heterodimer and one CD247 homodimer forming a stable octameric structure. CD3D-CD3E and CD3G-CD3E heterodimers preferentially associate with TR alpha and TR beta chains, respectively. The association of the CD247 homodimer is the last step of TcR assembly in the endoplasmic reticulum and is required for transport to the cell surface.

It localises to the cell membrane. Functionally, v region of the variable domain of T cell receptor (TR) alpha chain that participates in the antigen recognition. Alpha-beta T cell receptors are antigen specific receptors which are essential to the immune response and are present on the cell surface of T lymphocytes. Recognize peptide-major histocompatibility (MH) (pMH) complexes that are displayed by antigen presenting cells (APC), a prerequisite for efficient T cell adaptive immunity against pathogens. Binding of alpha-beta TR to pMH complex initiates TR-CD3 clustering on the cell surface and intracellular activation of LCK that phosphorylates the ITAM motifs of CD3G, CD3D, CD3E and CD247 enabling the recruitment of ZAP70. In turn ZAP70 phosphorylates LAT, which recruits numerous signaling molecules to form the LAT signalosome. The LAT signalosome propagates signal branching to three major signaling pathways, the calcium, the mitogen-activated protein kinase (MAPK) kinase and the nuclear factor NF-kappa-B (NF-kB) pathways, leading to the mobilization of transcription factors that are critical for gene expression and essential for T cell growth and differentiation. The T cell repertoire is generated in the thymus, by V-(D)-J rearrangement. This repertoire is then shaped by intrathymic selection events to generate a peripheral T cell pool of self-MH restricted, non-autoaggressive T cells. Post-thymic interaction of alpha-beta TR with the pMH complexes shapes TR structural and functional avidity. This Homo sapiens (Human) protein is T cell receptor alpha variable 24.